The sequence spans 225 residues: DNA repair protein RecO (225 aa).

The protein belongs to the RecO family.

Functionally, involved in DNA repair and RecF pathway recombination. In Clostridium perfringens (strain ATCC 13124 / DSM 756 / JCM 1290 / NCIMB 6125 / NCTC 8237 / Type A), this protein is DNA repair protein RecO.